The sequence spans 252 residues: Transmembrane ascorbate-dependent reductase CYB561 (252 aa).

Met1 carries the N-acetylmethionine modification. The Cytoplasmic portion of the chain corresponds to 1–17 (MEGPASPAPAPGALPYY). Residues 18–38 (VAFSQLLGLTVVAMTGAWLGM) traverse the membrane as a helical segment. Residues 20-221 (FSQLLGLTVV…FATVVLYILT (202 aa)) enclose the Cytochrome b561 domain. The Vesicular segment spans residues 39 to 52 (YRGGIAWESALQFN). A helical membrane pass occupies residues 53–73 (VHPLCMVIGLVFLQGDALLVY). 3 residues coordinate heme b: His54, Arg74, and Lys81. Residues 74-86 (RVFRNEAKRTTKV) lie on the Cytoplasmic side of the membrane. L-ascorbate contacts are provided by Lys81 and Lys85. A helical membrane pass occupies residues 87-107 (LHGLLHVFAFVIALVGLVAVF). Heme b-binding positions include His88, 117-120 (DLYS), and His122. Over 108 to 125 (EHHRKKGYADLYSLHSWC) the chain is Vesicular. A helical membrane pass occupies residues 126 to 146 (GILVFALFFAQWLVGFSFFLF). The Cytoplasmic segment spans residues 147-159 (PGASFSLRSRYRP). Arg154 is a binding site for L-ascorbate. A helical transmembrane segment spans residues 160–180 (QHVFFGAAIFLLSVATALLGL). Heme b contacts are provided by His161 and Glu182. Residues 181–199 (KEALLFELGTKYSTFEPEG) are Vesicular-facing. Residues 200 to 220 (VLANVLGLLLAAFATVVLYIL) traverse the membrane as a helical segment. The Cytoplasmic portion of the chain corresponds to 221-252 (TRADWKRPLQAEEQALSMDFKTLTEGDSPSSQ). Position 226 (Lys226) interacts with heme b. Phosphoserine occurs at positions 248 and 250.

Heme b serves as cofactor.

Its subcellular location is the cytoplasmic vesicle. It localises to the secretory vesicle. The protein resides in the chromaffin granule membrane. The enzyme catalyses monodehydro-L-ascorbate radical(out) + L-ascorbate(in) = monodehydro-L-ascorbate radical(in) + L-ascorbate(out). Functionally, transmembrane reductase that uses ascorbate as an electron donor in the cytoplasm and transfers electrons across membranes to reduce monodehydro-L-ascorbate radical in the lumen of secretory vesicles. It is therefore involved the regeneration and homeostasis within secretory vesicles of ascorbate which in turn provides reducing equivalents needed to support the activity of intravesicular enzymes. The polypeptide is Transmembrane ascorbate-dependent reductase CYB561 (CYB561) (Ovis aries (Sheep)).